Consider the following 560-residue polypeptide: N-acetylglucosamine-6-sulfatase (560 aa).

The tract at residues 1–25 is disordered; it reads MRLLSLAPDRPRRGGPRHLTSGSPA. The N-terminal stretch at 1-48 is a signal peptide; it reads MRLLSLAPDRPRRGGPRHLTSGSPALPPPPPLLLLLLLLGGCLGVSGA. 3 residues coordinate Ca(2+): aspartate 63, aspartate 64, and cysteine 99. The active-site Nucleophile is the cysteine 99. Cysteine 99 carries the post-translational modification 3-oxoalanine (Cys). N-linked (GlcNAc...) asparagine glycans are attached at residues asparagine 119, asparagine 125, asparagine 191, asparagine 206, asparagine 218, asparagine 287, and asparagine 325. Residues aspartate 334 and asparagine 335 each contribute to the Ca(2+) site. 6 N-linked (GlcNAc...) asparagine glycosylation sites follow: asparagine 370, asparagine 395, asparagine 413, asparagine 430, asparagine 457, and asparagine 488. Serine 549 bears the Phosphoserine mark.

This sequence belongs to the sulfatase family. Requires Ca(2+) as cofactor. Post-translationally, the conversion to 3-oxoalanine (also known as C-formylglycine, FGly), of a serine or cysteine residue in prokaryotes and of a cysteine residue in eukaryotes, is critical for catalytic activity.

The protein resides in the lysosome. The catalysed reaction is Hydrolysis of the 6-sulfate groups of the N-acetyl-D-glucosamine 6-sulfate units of heparan sulfate and keratan sulfate.. Functionally, hydrolyzes 6-sulfate groups in N-acetyl-d-glucosaminide units of heparin sulfate and keratan sulfate. The protein is N-acetylglucosamine-6-sulfatase (GNS) of Bos taurus (Bovine).